The primary structure comprises 299 residues: UDP-N-acetylenolpyruvoylglucosamine reductase (299 aa).

The FAD-binding PCMH-type domain occupies 31–192; sequence VGGVAEVVFK…VDATFVGACG (162 aa). R172 is an active-site residue. S221 functions as the Proton donor in the catalytic mechanism. Residue E291 is part of the active site.

It belongs to the MurB family. The cofactor is FAD.

It is found in the cytoplasm. The catalysed reaction is UDP-N-acetyl-alpha-D-muramate + NADP(+) = UDP-N-acetyl-3-O-(1-carboxyvinyl)-alpha-D-glucosamine + NADPH + H(+). The protein operates within cell wall biogenesis; peptidoglycan biosynthesis. Functionally, cell wall formation. This chain is UDP-N-acetylenolpyruvoylglucosamine reductase, found in Anaplasma marginale (strain St. Maries).